Here is a 230-residue protein sequence, read N- to C-terminus: 5'-methylthioadenosine/S-adenosylhomocysteine nucleosidase (230 aa).

The active-site Proton acceptor is the E12. Residues G78, M153, and 174 to 175 (ME) contribute to the substrate site. The active-site Proton donor is the D198.

The protein belongs to the PNP/UDP phosphorylase family. MtnN subfamily.

It carries out the reaction S-adenosyl-L-homocysteine + H2O = S-(5-deoxy-D-ribos-5-yl)-L-homocysteine + adenine. The catalysed reaction is S-methyl-5'-thioadenosine + H2O = 5-(methylsulfanyl)-D-ribose + adenine. It catalyses the reaction 5'-deoxyadenosine + H2O = 5-deoxy-D-ribose + adenine. It participates in amino-acid biosynthesis; L-methionine biosynthesis via salvage pathway; S-methyl-5-thio-alpha-D-ribose 1-phosphate from S-methyl-5'-thioadenosine (hydrolase route): step 1/2. Its function is as follows. Catalyzes the irreversible cleavage of the glycosidic bond in both 5'-methylthioadenosine (MTA) and S-adenosylhomocysteine (SAH/AdoHcy) to adenine and the corresponding thioribose, 5'-methylthioribose and S-ribosylhomocysteine, respectively. Also cleaves 5'-deoxyadenosine, a toxic by-product of radical S-adenosylmethionine (SAM) enzymes, into 5-deoxyribose and adenine. This chain is 5'-methylthioadenosine/S-adenosylhomocysteine nucleosidase, found in Lysinibacillus sphaericus (strain C3-41).